The primary structure comprises 155 residues: Interleukin-2 (155 aa).

A signal peptide spans Met-1–Gly-20. O-linked (GalNAc...) threonine glycosylation occurs at Thr-23. A disulfide bond links Cys-79 and Cys-127.

It belongs to the IL-2 family.

The protein resides in the secreted. Functionally, cytokine produced by activated CD4-positive helper T-cells and to a lesser extend activated CD8-positive T-cells and natural killer (NK) cells that plays pivotal roles in the immune response and tolerance. Binds to a receptor complex composed of either the high-affinity trimeric IL-2R (IL2RA/CD25, IL2RB/CD122 and IL2RG/CD132) or the low-affinity dimeric IL-2R (IL2RB and IL2RG). Interaction with the receptor leads to oligomerization and conformation changes in the IL-2R subunits resulting in downstream signaling starting with phosphorylation of JAK1 and JAK3. In turn, JAK1 and JAK3 phosphorylate the receptor to form a docking site leading to the phosphorylation of several substrates including STAT5. This process leads to activation of several pathways including STAT, phosphoinositide-3-kinase/PI3K and mitogen-activated protein kinase/MAPK pathways. Functions as a T-cell growth factor and can increase NK-cell cytolytic activity as well. Promotes strong proliferation of activated B-cells and subsequently immunoglobulin production. Plays a pivotal role in regulating the adaptive immune system by controlling the survival and proliferation of regulatory T-cells, which are required for the maintenance of immune tolerance. Moreover, participates in the differentiation and homeostasis of effector T-cell subsets, including Th1, Th2, Th17 as well as memory CD8-positive T-cells. This is Interleukin-2 (IL2) from Boselaphus tragocamelus (Nilgai).